The following is a 133-amino-acid chain: Fluoride-specific ion channel FluC (133 aa).

The next 4 helical transmembrane spans lie at 4-24 (LLWI…LSVL), 35-55 (WGTL…WVLA), 66-86 (VFIF…SLES), and 107-127 (VLGL…LGGP). The Na(+) site is built by G74 and T77.

Belongs to the fluoride channel Fluc/FEX (TC 1.A.43) family.

It localises to the cell inner membrane. The catalysed reaction is fluoride(in) = fluoride(out). Na(+) is not transported, but it plays an essential structural role and its presence is essential for fluoride channel function. In terms of biological role, fluoride-specific ion channel. Important for reducing fluoride concentration in the cell, thus reducing its toxicity. The sequence is that of Fluoride-specific ion channel FluC from Salinibacter ruber (strain DSM 13855 / M31).